Consider the following 409-residue polypeptide: Cobalt-precorrin-5B C(1)-methyltransferase (409 aa).

Belongs to the CbiD family.

It carries out the reaction Co-precorrin-5B + S-adenosyl-L-methionine = Co-precorrin-6A + S-adenosyl-L-homocysteine. It functions in the pathway cofactor biosynthesis; adenosylcobalamin biosynthesis; cob(II)yrinate a,c-diamide from sirohydrochlorin (anaerobic route): step 6/10. In terms of biological role, catalyzes the methylation of C-1 in cobalt-precorrin-5B to form cobalt-precorrin-6A. This chain is Cobalt-precorrin-5B C(1)-methyltransferase, found in Methanopyrus kandleri (strain AV19 / DSM 6324 / JCM 9639 / NBRC 100938).